The chain runs to 453 residues: Carbamoyl phosphate synthase arginine-specific small chain (453 aa).

The transit peptide at 1 to 33 (MFSRLAARLPKASALNGVAARQVRNLSQPAITG) directs the protein to the mitochondrion. The interval 26-50 (LSQPAITGSKGRNMPAREPRTTAAA) is disordered. The L-glutamine site is built by serine 97, glycine 280, and glycine 282. Residues 233-420 (HVALIDCGVK…MENVELFKSN (188 aa)) form the Glutamine amidotransferase type-1 domain. The active-site Nucleophile is cysteine 309. The L-glutamine site is built by leucine 310, glutamine 313, asparagine 351, glycine 353, and tyrosine 354. Catalysis depends on residues histidine 393 and glutamate 395.

It belongs to the CarA family. Heterodimer composed of 2 chains; the small (or glutamine) chain promotes the hydrolysis of glutamine to ammonia, which is used by the large (or ammonia) chain to synthesize carbamoyl phosphate.

It is found in the mitochondrion matrix. The enzyme catalyses hydrogencarbonate + L-glutamine + 2 ATP + H2O = carbamoyl phosphate + L-glutamate + 2 ADP + phosphate + 2 H(+). It carries out the reaction L-glutamine + H2O = L-glutamate + NH4(+). The protein operates within amino-acid biosynthesis; L-arginine biosynthesis; carbamoyl phosphate from bicarbonate: step 1/1. Functionally, small subunit of the arginine-specific carbamoyl phosphate synthase (CPSase). CPSase catalyzes the formation of carbamoyl phosphate from the ammonia moiety of glutamine, carbonate, and phosphate donated by ATP, the first step of the arginine biosynthetic pathway. The small subunit (glutamine amidotransferase) binds and cleaves glutamine to supply the large subunit with the substrate ammonia. This Neurospora crassa (strain ATCC 24698 / 74-OR23-1A / CBS 708.71 / DSM 1257 / FGSC 987) protein is Carbamoyl phosphate synthase arginine-specific small chain (arg-2).